The chain runs to 84 residues: U1-hexatoxin-Iw1a (84 aa).

An N-terminal signal peptide occupies residues 1 to 18; that stretch reads MLKFVVVICLVIMAITFA. 5 cysteine pairs are disulfide-bonded: Cys-21/Cys-32, Cys-26/Cys-40, Cys-31/Cys-66, Cys-50/Cys-74, and Cys-68/Cys-81.

The protein belongs to the MIT-like AcTx family. Expressed by the venom gland.

It localises to the secreted. This Illawarra wisharti (Illawarra funnel-web spider) protein is U1-hexatoxin-Iw1a.